We begin with the raw amino-acid sequence, 28 residues long: Dermaseptin-DI2 (28 aa).

Expressed by the skin glands.

The protein resides in the secreted. Its function is as follows. Has antibacterial activity against the Gram-positive bacteria S.aureus and E.faecalis, and the Gram-negative bacteria P.aeruginosa and E.coli. Has antiprotozoal activity against T.cruzi. Has antifungal activity against the yeasts C.tropicalis (MIC=10.9 uM), C.guilliermondii (MIC=21.8 uM), C.albicans (MIC=21.8 uM) and C.albicans ATCC 1023 (MIC=10.9 uM). Decreases viability of murine peritoneal cells. Fuses to, and disrupts liposomes. The chain is Dermaseptin-DI2 from Phyllomedusa distincta (Monkey frog).